Here is a 194-residue protein sequence, read N- to C-terminus: Fe/S biogenesis protein NfuA (194 aa).

2 residues coordinate [4Fe-4S] cluster: Cys-151 and Cys-154.

It belongs to the NfuA family. Homodimer. Requires [4Fe-4S] cluster as cofactor.

In terms of biological role, involved in iron-sulfur cluster biogenesis. Binds a 4Fe-4S cluster, can transfer this cluster to apoproteins, and thereby intervenes in the maturation of Fe/S proteins. Could also act as a scaffold/chaperone for damaged Fe/S proteins. The sequence is that of Fe/S biogenesis protein NfuA from Vibrio vulnificus (strain CMCP6).